A 548-amino-acid polypeptide reads, in one-letter code: Chaperonin GroEL (548 aa).

ATP is bound by residues 29-32 (TLGP), Lys50, 86-90 (DGTTT), Gly413, 479-481 (NAA), and Asp496.

The protein belongs to the chaperonin (HSP60) family. As to quaternary structure, forms a cylinder of 14 subunits composed of two heptameric rings stacked back-to-back. Interacts with the co-chaperonin GroES.

The protein resides in the cytoplasm. It carries out the reaction ATP + H2O + a folded polypeptide = ADP + phosphate + an unfolded polypeptide.. Functionally, together with its co-chaperonin GroES, plays an essential role in assisting protein folding. The GroEL-GroES system forms a nano-cage that allows encapsulation of the non-native substrate proteins and provides a physical environment optimized to promote and accelerate protein folding. In Deinococcus radiodurans (strain ATCC 13939 / DSM 20539 / JCM 16871 / CCUG 27074 / LMG 4051 / NBRC 15346 / NCIMB 9279 / VKM B-1422 / R1), this protein is Chaperonin GroEL.